The sequence spans 160 residues: MMSVSVCPCGSGNLLDACCGHYHAGTPAPDAQALMRSRYSAYVLGLVDYLVATTLPAQQAGLDRAAMADWSAQSTWLGLEVESAEVLGGQPEHSFVTFTARWHDQDGDHQHRERSAFVQHAGRWYFIDPTVGLKAGRNDPCPCASGHKFKKCCNNYLPKG.

It belongs to the UPF0225 family.

The polypeptide is UPF0225 protein PP_1119 (Pseudomonas putida (strain ATCC 47054 / DSM 6125 / CFBP 8728 / NCIMB 11950 / KT2440)).